A 162-amino-acid polypeptide reads, in one-letter code: Large ribosomal subunit protein uL10 (162 aa).

Belongs to the universal ribosomal protein uL10 family. Part of the ribosomal stalk of the 50S ribosomal subunit. The N-terminus interacts with L11 and the large rRNA to form the base of the stalk. The C-terminus forms an elongated spine to which L12 dimers bind in a sequential fashion forming a multimeric L10(L12)X complex.

Functionally, forms part of the ribosomal stalk, playing a central role in the interaction of the ribosome with GTP-bound translation factors. The protein is Large ribosomal subunit protein uL10 (rplJ) of Borreliella burgdorferi (strain ATCC 35210 / DSM 4680 / CIP 102532 / B31) (Borrelia burgdorferi).